A 256-amino-acid polypeptide reads, in one-letter code: Trans-aconitate 2-methyltransferase (256 aa).

It belongs to the methyltransferase superfamily. Tam family.

It is found in the cytoplasm. It carries out the reaction trans-aconitate + S-adenosyl-L-methionine = (E)-3-(methoxycarbonyl)pent-2-enedioate + S-adenosyl-L-homocysteine. In terms of biological role, catalyzes the S-adenosylmethionine monomethyl esterification of trans-aconitate. The protein is Trans-aconitate 2-methyltransferase of Rhodopseudomonas palustris (strain HaA2).